A 546-amino-acid polypeptide reads, in one-letter code: Probable protein kinase UbiB (546 aa).

Residues 124 to 502 (DFEIKPLASA…HVRQGQSRYF (379 aa)) enclose the Protein kinase domain. Residues 130-138 (LASASIAQV) and Lys153 contribute to the ATP site. Catalysis depends on Asp288, which acts as the Proton acceptor. Helical transmembrane passes span 501-521 (YFLG…VSRP) and 522-542 (EWGL…FVGW).

This sequence belongs to the ABC1 family. UbiB subfamily.

The protein localises to the cell inner membrane. It participates in cofactor biosynthesis; ubiquinone biosynthesis [regulation]. Its function is as follows. Is probably a protein kinase regulator of UbiI activity which is involved in aerobic coenzyme Q (ubiquinone) biosynthesis. The sequence is that of Probable protein kinase UbiB from Shigella sonnei (strain Ss046).